An 894-amino-acid chain; its full sequence is Alpha-actinin-2 (894 aa).

The segment at 1 to 254 (MNQIEPGVQY…IMTYVSCFYH (254 aa)) is actin-binding. Calponin-homology (CH) domains lie at 38-142 (KQQR…LRFA) and 151-257 (TSAK…HAFA). Phosphothreonine is present on T237. Spectrin repeat units lie at residues 281 to 391 (RLME…WLLN), 401 to 506 (HLAE…ALER), 516 to 627 (QLHL…SLQE), and 637 to 740 (RLRR…EVET). 2 EF-hand domains span residues 753 to 788 (EQMNEFRASFNHFDRRKNGLMDHEDFRACLISMGYD) and 789 to 824 (LGEAEFARIMTLVDPNGQGTVTFQSFIDFMTRETAD). Ca(2+) contacts are provided by D766, N770, D777, D802, N804, and T808.

It belongs to the alpha-actinin family. Homodimer; antiparallel. Also forms heterodimers with ACTN3. Interacts with ADAM12, MYOZ1, MYOZ2 and MYOZ3. Interacts via its C-terminal region with the LDB3 PDZ domain. Interacts with XIRP2. Interacts with DST (via N-terminus). Interacts with PARVB. Interacts with SYNPO2. In terms of processing, ubiquitinated by FBXL22, leading to proteasomal degradation.

Its subcellular location is the cytoplasm. It localises to the myofibril. It is found in the sarcomere. The protein localises to the z line. F-actin cross-linking protein which is thought to anchor actin to a variety of intracellular structures. This is a bundling protein. The polypeptide is Alpha-actinin-2 (ACTN2) (Bos taurus (Bovine)).